Here is a 403-residue protein sequence, read N- to C-terminus: S-adenosylmethionine synthase (403 aa).

An ATP-binding site is contributed by histidine 22. Aspartate 24 lines the Mg(2+) pocket. K(+) is bound at residue glutamate 50. 2 residues coordinate L-methionine: glutamate 63 and glutamine 107. Residues glutamine 107–lysine 117 form a flexible loop region. ATP contacts are provided by residues aspartate 182–lysine 184, arginine 248–phenylalanine 249, aspartate 257, arginine 263–lysine 264, alanine 280, and lysine 284. Residue aspartate 257 coordinates L-methionine. Lysine 288 serves as a coordination point for L-methionine.

The protein belongs to the AdoMet synthase family. In terms of assembly, homotetramer; dimer of dimers. Requires Mg(2+) as cofactor. K(+) serves as cofactor.

The protein localises to the cytoplasm. The enzyme catalyses L-methionine + ATP + H2O = S-adenosyl-L-methionine + phosphate + diphosphate. The protein operates within amino-acid biosynthesis; S-adenosyl-L-methionine biosynthesis; S-adenosyl-L-methionine from L-methionine: step 1/1. In terms of biological role, catalyzes the formation of S-adenosylmethionine (AdoMet) from methionine and ATP. The overall synthetic reaction is composed of two sequential steps, AdoMet formation and the subsequent tripolyphosphate hydrolysis which occurs prior to release of AdoMet from the enzyme. This is S-adenosylmethionine synthase from Chloroflexus aurantiacus (strain ATCC 29366 / DSM 635 / J-10-fl).